Consider the following 243-residue polypeptide: tRNA (guanine-N(1)-)-methyltransferase (243 aa).

S-adenosyl-L-methionine-binding positions include Gly108 and 127 to 132 (LGDFVL).

Belongs to the RNA methyltransferase TrmD family. In terms of assembly, homodimer.

It is found in the cytoplasm. It carries out the reaction guanosine(37) in tRNA + S-adenosyl-L-methionine = N(1)-methylguanosine(37) in tRNA + S-adenosyl-L-homocysteine + H(+). Specifically methylates guanosine-37 in various tRNAs. In Streptococcus pyogenes serotype M5 (strain Manfredo), this protein is tRNA (guanine-N(1)-)-methyltransferase.